Here is a 245-residue protein sequence, read N- to C-terminus: Probable GTP-binding protein EngB (245 aa).

One can recognise an EngB-type G domain in the interval 46 to 223 (DVPEIAFVGR…AQHLWDWAHP (178 aa)). Residues 54-61 (GRSNAGKS), 81-85 (GRTQS), 103-106 (DLPG), 173-176 (TKSD), and 202-204 (FSS) contribute to the GTP site. The Mg(2+) site is built by serine 61 and threonine 83. Residues 219–245 (DWAHPPEKPAKKPKAEPAAEAATGDEG) are disordered. The span at 222-235 (HPPEKPAKKPKAEP) shows a compositional bias: basic and acidic residues. Positions 236–245 (AAEAATGDEG) are enriched in low complexity.

Belongs to the TRAFAC class TrmE-Era-EngA-EngB-Septin-like GTPase superfamily. EngB GTPase family. It depends on Mg(2+) as a cofactor.

Necessary for normal cell division and for the maintenance of normal septation. This is Probable GTP-binding protein EngB from Polaromonas sp. (strain JS666 / ATCC BAA-500).